The primary structure comprises 258 residues: UPF0246 protein VV1_0535 (258 aa).

Belongs to the UPF0246 family.

The polypeptide is UPF0246 protein VV1_0535 (Vibrio vulnificus (strain CMCP6)).